The primary structure comprises 117 residues: Fluoride-specific ion channel FluC 2 (117 aa).

The next 2 membrane-spanning stretches (helical) occupy residues 1–21 and 46–66; these read MISI…RSAI and FLIG…AFFV. Positions 71 and 74 each coordinate Na(+). A helical transmembrane segment spans residues 95–115; that stretch reads LFLNYSLLQFIIGFIACYIGY.

The protein belongs to the fluoride channel Fluc/FEX (TC 1.A.43) family.

Its subcellular location is the cell membrane. The catalysed reaction is fluoride(in) = fluoride(out). Na(+) is not transported, but it plays an essential structural role and its presence is essential for fluoride channel function. In terms of biological role, fluoride-specific ion channel. Important for reducing fluoride concentration in the cell, thus reducing its toxicity. The chain is Fluoride-specific ion channel FluC 2 from Staphylococcus aureus (strain MRSA252).